An 875-amino-acid polypeptide reads, in one-letter code: Probable ATP-dependent RNA helicase DDX10 (875 aa).

The segment at 1–44 (MGKTVASLGQGTRPDPVRSFNRWKKKHSHRQHQKKERRKQLKKP) is disordered. Residue Thr4 is modified to Phosphothreonine. Residue Ser7 is modified to Phosphoserine. Positions 21 to 41 (NRWKKKHSHRQHQKKERRKQL) are enriched in basic residues. The Q motif signature appears at 69-97 (TRFSDFPLSKKTLKGLQEAQYRLVTEIQK). ATP-binding positions include 89–91 (YRL), Gln96, and 113–120 (AKTGSGKT). A Helicase ATP-binding domain is found at 100 to 274 (IGLALQGKDV…RLSLKDPEYV (175 aa)). Positions 222-225 (DEAD) match the DEAD box motif. The Helicase C-terminal domain occupies 300-449 (KISVLFSFLR…EIKINPEKLI (150 aa)). The interval 525–612 (LVKNPVTEAV…HTESVVSIEE (88 aa)) is disordered. Phosphoserine is present on Ser540. An N6-acetyllysine modification is found at Lys556. The segment covering 562 to 575 (KSGERLEETEHRLA) has biased composition (basic and acidic residues). Acidic residues predominate over residues 578-593 (DGDEEQDEETEDEETE). Position 587 is a phosphothreonine (Thr587). A compositionally biased stretch (basic and acidic residues) spans 594 to 604 (DHLGKAREPHT). Lys652 is covalently cross-linked (Glycyl lysine isopeptide (Lys-Gly) (interchain with G-Cter in SUMO2)). Basic and acidic residues predominate over residues 734–744 (EEDKFDKEEYR). The interval 734–860 (EEDKFDKEEY…VEPLDTGLSL (127 aa)) is disordered. A compositionally biased stretch (basic residues) spans 745–754 (KKIKAKHRER). The segment covering 755–774 (RLKEREARREANKRQAKARD) has biased composition (basic and acidic residues). Acidic residues predominate over residues 775 to 789 (EEEAFLDWSDEDDGG). At Ser783 the chain carries Phosphoserine. Basic and acidic residues predominate over residues 797-831 (DPDKHRSSEESESEDTNHKMSDTKKKQETRKRNNT).

This sequence belongs to the DEAD box helicase family. DDX10/DBP4 subfamily. As to quaternary structure, interacts with AIM2; this interaction promotes AIM2 stability. Interacts with SCNA; this interaction causes DDX10 mislocalization to the nucleoplasm and cytoplasmic inclusions.

Its subcellular location is the cytoplasm. The protein resides in the nucleus. The protein localises to the nucleolus. The catalysed reaction is ATP + H2O = ADP + phosphate + H(+). Putative ATP-dependent RNA helicase that plays various role in innate immunity or inflammation. Plays a role in the enhancement of AIM2-induced inflammasome activation by interacting with AIM2 and stabilizing its protein level. Negatively regulates viral infection by promoting interferon beta production and interferon stimulated genes/ISGs expression. This is Probable ATP-dependent RNA helicase DDX10 (Ddx10) from Mus musculus (Mouse).